Here is a 287-residue protein sequence, read N- to C-terminus: SPX domain-containing protein 2 (287 aa).

Residues 1 to 162 enclose the SPX domain; it reads MKFGKSLSNQ…GALIRLPFIQ (162 aa). The segment covering 36–50 has biased composition (basic and acidic residues); the sequence is EPRSVENRPNKRSRS. 2 disordered regions span residues 36–61 and 194–213; these read EPRSVENRPNKRSRSDSNSVDTDPTV and KSRNLDEEGEPTTSGMVKTG.

The protein resides in the nucleus. In terms of biological role, may inhibit PHR1 DNA-binding activity in a Pi-dependent manner. This chain is SPX domain-containing protein 2, found in Arabidopsis thaliana (Mouse-ear cress).